A 235-amino-acid polypeptide reads, in one-letter code: Dephospho-CoA kinase (235 aa).

In terms of domain architecture, DPCK spans 15–219 (NVGLTGSISC…KKERLQRKSA (205 aa)). Residue 23 to 28 (SCGKST) coordinates ATP.

Belongs to the CoaE family.

It localises to the cytoplasm. The enzyme catalyses 3'-dephospho-CoA + ATP = ADP + CoA + H(+). The protein operates within cofactor biosynthesis; coenzyme A biosynthesis; CoA from (R)-pantothenate: step 5/5. Functionally, catalyzes the phosphorylation of the 3'-hydroxyl group of dephosphocoenzyme A to form coenzyme A. The protein is Dephospho-CoA kinase of Syntrophus aciditrophicus (strain SB).